Here is a 218-residue protein sequence, read N- to C-terminus: Sodium channel regulatory subunit beta-1 (218 aa).

The signal sequence occupies residues 1 to 18; it reads MGRLLAFVVGAALVSSAW. Over 19-157 the chain is Extracellular; sequence GGCVEVDSET…DKANRDMASI (139 aa). 2 cysteine pairs are disulfide-bonded: Cys21–Cys43 and Cys40–Cys121. In terms of domain architecture, Ig-like C2-type spans 22–150; that stretch reads VEVDSETEAV…KIHLEVVDKA (129 aa). Asn93, Asn110, Asn114, and Asn135 each carry an N-linked (GlcNAc...) asparagine glycan. The helical transmembrane segment at 158–179 threads the bilayer; it reads VSEIMMYVLIVVLTIWLVAEMV. The Cytoplasmic portion of the chain corresponds to 180-218; the sequence is YCYKKIAAATEAAAQENASEYLAITSESKENCTGVQVAE.

Belongs to the sodium channel auxiliary subunit SCN1B (TC 8.A.17) family. In terms of assembly, a voltage-gated sodium (Nav) channel consists of an ion-conducting pore-forming alpha subunit functional on its own that is regulated by one or more beta subunits. Interacts with SCN1A; regulatory subunit of SCN1A/Nav1.1. Interacts with SCN3A; regulatory subunit of SCN3A/Nav1.3. Interacts with SCN4A; regulatory subunit of SCN4A/Nav1.4. Interacts with SCN5A; regulatory subunit of SCN5A/Nav1.5. Interacts with SCN8A; regulatory subunit of SCN8A/Nav1.6. Interacts with SCN9A; regulatory subunit of SCN9A/Nav1.7. Interacts with SCN10A; regulatory subunit of SCN10A/Nav1.8. Interacts with NFASC. Interacts with TMEM65.

The protein localises to the cell membrane. It is found in the perikaryon. It localises to the cell projection. Its subcellular location is the axon. Its function is as follows. Regulatory subunit of multiple voltage-gated sodium (Nav) channels directly mediating the depolarization of excitable membranes. Navs, also called VGSCs (voltage-gated sodium channels) or VDSCs (voltage-dependent sodium channels), operate by switching between closed and open conformations depending on the voltage difference across the membrane. In the open conformation they allow Na(+) ions to selectively pass through the pore, along their electrochemical gradient. The influx of Na+ ions provokes membrane depolarization, initiating the propagation of electrical signals throughout cells and tissues. The accessory beta subunits participate in localization and functional modulation of the Nav channels. Modulates the activity of SCN1A/Nav1.1, SCN2A/Nav1.2, SCN3A/Nav1.3, SCN4A/Nav1.4, SCN5A/Nav1.5, SCN8A/Nav1.6, SCN9A/Nav1.7 and SCN10A/Nav1.8. The protein is Sodium channel regulatory subunit beta-1 of Oryctolagus cuniculus (Rabbit).